Here is a 175-residue protein sequence, read N- to C-terminus: NADH-ubiquinone oxidoreductase chain 6 (175 aa).

6 consecutive transmembrane segments (helical) span residues Met1–Pro21, Ser25–Leu45, Phe47–Val67, Val88–Leu108, Leu115–Ser137, and Tyr149–Met169.

It belongs to the complex I subunit 6 family. In terms of assembly, core subunit of respiratory chain NADH dehydrogenase (Complex I) which is composed of 45 different subunits.

It is found in the mitochondrion inner membrane. The catalysed reaction is a ubiquinone + NADH + 5 H(+)(in) = a ubiquinol + NAD(+) + 4 H(+)(out). Core subunit of the mitochondrial membrane respiratory chain NADH dehydrogenase (Complex I) which catalyzes electron transfer from NADH through the respiratory chain, using ubiquinone as an electron acceptor. Essential for the catalytic activity and assembly of complex I. The polypeptide is NADH-ubiquinone oxidoreductase chain 6 (MT-ND6) (Hippopotamus amphibius (Hippopotamus)).